A 417-amino-acid chain; its full sequence is Queuine tRNA-ribosyltransferase accessory subunit 2 (417 aa).

4 residues coordinate Zn(2+): Cys-324, Cys-326, Cys-329, and His-355.

Belongs to the queuine tRNA-ribosyltransferase family. QTRT2 subfamily. Heterodimer of a catalytic subunit and an accessory subunit. Zn(2+) serves as cofactor.

Its subcellular location is the cytoplasm. Functionally, non-catalytic subunit of the queuine tRNA-ribosyltransferase (TGT) that catalyzes the base-exchange of a guanine (G) residue with queuine (Q) at position 34 (anticodon wobble position) in tRNAs with GU(N) anticodons (tRNA-Asp, -Asn, -His and -Tyr), resulting in the hypermodified nucleoside queuosine (7-(((4,5-cis-dihydroxy-2-cyclopenten-1-yl)amino)methyl)-7-deazaguanosine). In Drosophila persimilis (Fruit fly), this protein is Queuine tRNA-ribosyltransferase accessory subunit 2.